The following is a 183-amino-acid chain: Ferredoxin-2, mitochondrial (183 aa).

Residues methionine 1–proline 52 constitute a mitochondrion transit peptide. One can recognise a 2Fe-2S ferredoxin-type domain in the interval valine 68 to threonine 170. [2Fe-2S] cluster is bound by residues cysteine 105, cysteine 111, cysteine 114, and cysteine 151.

It belongs to the adrenodoxin/putidaredoxin family. Component of the mitochondrial core iron-sulfur cluster (ISC) complex composed of NFS1, LYRM4, NDUFAB1, ISCU, FXN, and FDX2; this complex is a heterohexamer containing two copies of each monomer. Form a heterodimer complex with NFS1. Interacts (in both their reduced and oxidized states) with the cysteine desulfurase (NFS1:LYRM4) complex; this interaction stimulates cysteine desulfurase activity, and serves as a reductant for Fe-S cluster assembly. It depends on [2Fe-2S] cluster as a cofactor.

The protein localises to the mitochondrion. Its subcellular location is the mitochondrion matrix. In terms of biological role, electron donor, of the core iron-sulfur cluster (ISC) assembly complex, that acts to reduce the persulfide into sulfide during [2Fe-2S] clusters assembly on the scaffolding protein ISCU. The core iron-sulfur cluster (ISC) assembly complex is involved in the de novo synthesis of a [2Fe-2S] cluster, the first step of the mitochondrial iron-sulfur protein biogenesis. This process is initiated by the cysteine desulfurase complex (NFS1:LYRM4:NDUFAB1) that produces persulfide which is delivered on the scaffold protein ISCU in a FXN-dependent manner. Then this complex is stabilized by FDX2 which provides reducing equivalents to accomplish the [2Fe-2S] cluster assembly. Finally, the [2Fe-2S] cluster is transferred from ISCU to chaperone proteins, including HSCB, HSPA9 and GLRX5. Essential for coenzyme Q biosynthesis: together with FDXR, transfers the electrons required for the hydroxylation reaction performed by COQ6. The polypeptide is Ferredoxin-2, mitochondrial (Bos taurus (Bovine)).